We begin with the raw amino-acid sequence, 541 residues long: Ankyrin repeat domain-containing protein 13C (541 aa).

Over residues 1–20 (MTGEKIRSLRRDHKPSKEDG) the composition is skewed to basic and acidic residues. Positions 1-53 (MTGEKIRSLRRDHKPSKEDGDVLEPCEEEATAALGGAFTGGRSGPGGSGKGGK) are disordered. Positions 21–30 (DVLEPCEEEA) are enriched in acidic residues. Positions 37–52 (AFTGGRSGPGGSGKGG) are enriched in gly residues. ANK repeat units lie at residues 111–142 (PSLY…QKDN), 143–172 (HGNT…PVKV), and 176–205 (QGWS…QQSR). Phosphoserine is present on serine 411.

The protein resides in the endoplasmic reticulum membrane. In terms of biological role, acts as a molecular chaperone for G protein-coupled receptors, regulating their biogenesis and exit from the ER. In Mus musculus (Mouse), this protein is Ankyrin repeat domain-containing protein 13C (Ankrd13c).